Here is a 132-residue protein sequence, read N- to C-terminus: Small ribosomal subunit protein uS8 (132 aa).

This sequence belongs to the universal ribosomal protein uS8 family. Part of the 30S ribosomal subunit. Contacts proteins S5 and S12.

In terms of biological role, one of the primary rRNA binding proteins, it binds directly to 16S rRNA central domain where it helps coordinate assembly of the platform of the 30S subunit. In Syntrophobacter fumaroxidans (strain DSM 10017 / MPOB), this protein is Small ribosomal subunit protein uS8.